The primary structure comprises 120 residues: Ribosome-binding factor A (120 aa).

Belongs to the RbfA family. Monomer. Binds 30S ribosomal subunits, but not 50S ribosomal subunits or 70S ribosomes.

It localises to the cytoplasm. Functionally, one of several proteins that assist in the late maturation steps of the functional core of the 30S ribosomal subunit. Associates with free 30S ribosomal subunits (but not with 30S subunits that are part of 70S ribosomes or polysomes). Required for efficient processing of 16S rRNA. May interact with the 5'-terminal helix region of 16S rRNA. In Rickettsia conorii (strain ATCC VR-613 / Malish 7), this protein is Ribosome-binding factor A.